Reading from the N-terminus, the 252-residue chain is MTILFLTMVISYFGCMKAAPMKEANVRGQGSLAYPGVRTHGTLESVNGPKAGSRGLTSSSSSSLADTFEHVIEELLDEDQKVRPNEENNKDADMYTSRVMLSSQVPLEPPLLFLLEEYKNYLDAANMSMRVRRHSDPARRGELSVCDSISEWVTAADKKTAVDMSGGTVTVLEKVPVSKGQLKQYFYETKCNPMGYTKEGCRGIDKRHWNSQCRTTQSYVRALTMDSKKRIGWRFIRIDTSCVCTLTIKRGR.

Positions 1 to 18 are cleaved as a signal peptide; the sequence is MTILFLTMVISYFGCMKA. A propeptide spanning residues 19 to 133 is cleaved from the precursor; it reads APMKEANVRG…AANMSMRVRR (115 aa). The tract at residues 43–62 is disordered; sequence LESVNGPKAGSRGLTSSSSS. N126 is a glycosylation site (N-linked (GlcNAc...) asparagine). Intrachain disulfides connect C146–C213, C191–C242, and C201–C244.

This sequence belongs to the NGF-beta family. As to quaternary structure, monomers and homodimers. Binds to NTRK2/TRKB. Can form heterodimers with other neurotrophin family members, such as NTF3 and NTF4 (in vitro), but the physiological relevance of this is not clear. BDNF precursor form: interacts with the heterodimer formed by NGFR and SORCS2. Mature BDNF has much lower affinity for the heterodimer formed by NGFR and SORCS2. Post-translationally, N-glycosylated and glycosulfated, contrary to mature BDNF. Mature BDNF is produced by proteolytic removal of the propeptide, catalyzed by a FURIN family member. In addition, the precursor form is proteolytically cleaved within the propeptide, but this is not an obligatory intermediate for the production of mature BDNF. Can be converted into mature BDNF by plasmin (PLG). In terms of tissue distribution, brain and central nervous system.

Its subcellular location is the secreted. Important signaling molecule that activates signaling cascades downstream of NTRK2. During development, promotes the survival and differentiation of selected neuronal populations of the peripheral and central nervous systems. Participates in axonal growth, pathfinding and in the modulation of dendritic growth and morphology. Major regulator of synaptic transmission and plasticity at adult synapses in many regions of the CNS. The versatility of BDNF is emphasized by its contribution to a range of adaptive neuronal responses including long-term potentiation (LTP), long-term depression (LTD), certain forms of short-term synaptic plasticity, as well as homeostatic regulation of intrinsic neuronal excitability. Functionally, important signaling molecule that activates signaling cascades downstream of NTRK2. Activates signaling cascades via the heterodimeric receptor formed by NGFR and SORCS2. Signaling via NGFR and SORCS2 plays a role in synaptic plasticity and long-term depression (LTD). Binding to NGFR and SORCS2 promotes neuronal apoptosis. Promotes neuronal growth cone collapse. The polypeptide is Neurotrophic factor BDNF precursor form (BDNF) (Sus scrofa (Pig)).